The chain runs to 370 residues: Flagellar P-ring protein (370 aa).

The N-terminal stretch at 1-24 is a signal peptide; sequence MTLSKWILSFGLSVCLIVSHPVSA.

This sequence belongs to the FlgI family. The basal body constitutes a major portion of the flagellar organelle and consists of four rings (L,P,S, and M) mounted on a central rod.

It localises to the periplasm. It is found in the bacterial flagellum basal body. Functionally, assembles around the rod to form the L-ring and probably protects the motor/basal body from shearing forces during rotation. This Nitrosomonas europaea (strain ATCC 19718 / CIP 103999 / KCTC 2705 / NBRC 14298) protein is Flagellar P-ring protein.